The sequence spans 858 residues: Alanine--tRNA ligase (858 aa).

Residues His550, His554, Cys652, and His656 each coordinate Zn(2+).

It belongs to the class-II aminoacyl-tRNA synthetase family. Requires Zn(2+) as cofactor.

It localises to the cytoplasm. It carries out the reaction tRNA(Ala) + L-alanine + ATP = L-alanyl-tRNA(Ala) + AMP + diphosphate. Catalyzes the attachment of alanine to tRNA(Ala) in a two-step reaction: alanine is first activated by ATP to form Ala-AMP and then transferred to the acceptor end of tRNA(Ala). Also edits incorrectly charged Ser-tRNA(Ala) and Gly-tRNA(Ala) via its editing domain. This is Alanine--tRNA ligase from Pseudothermotoga lettingae (strain ATCC BAA-301 / DSM 14385 / NBRC 107922 / TMO) (Thermotoga lettingae).